Here is a 176-residue protein sequence, read N- to C-terminus: Large ribosomal subunit protein bL28m (176 aa).

The N-terminal 8 residues, 1-8 (MASKLLRK), are a transit peptide targeting the mitochondrion.

Belongs to the bacterial ribosomal protein bL28 family. In terms of assembly, component of the mitochondrial large ribosomal subunit (mt-LSU). Mature yeast 74S mitochondrial ribosomes consist of a small (37S) and a large (54S) subunit. The 37S small subunit contains a 15S ribosomal RNA (15S mt-rRNA) and at least 32 different proteins. The 54S large subunit contains a 21S rRNA (21S mt-rRNA) and at least 45 different proteins.

Its subcellular location is the cytoplasm. It is found in the mitochondrion. Its function is as follows. Component of the mitochondrial ribosome (mitoribosome), a dedicated translation machinery responsible for the synthesis of mitochondrial genome-encoded proteins, including at least some of the essential transmembrane subunits of the mitochondrial respiratory chain. The mitoribosomes are attached to the mitochondrial inner membrane and translation products are cotranslationally integrated into the membrane. This chain is Large ribosomal subunit protein bL28m (mrpl24), found in Schizosaccharomyces pombe (strain 972 / ATCC 24843) (Fission yeast).